Consider the following 150-residue polypeptide: Transthyretin (150 aa).

The first 20 residues, 1–20, serve as a signal peptide directing secretion; the sequence is MAFHSTLLVFLAGLVFLSEA. Cysteine 33 bears the Sulfocysteine mark. 3 residues coordinate L-thyroxine: lysine 38, glutamate 77, and serine 140.

It belongs to the transthyretin family. Homotetramer. Dimer of dimers. In the homotetramer, subunits assemble around a central channel that can accommodate two ligand molecules. Post-translationally, sulfonation of the reactive cysteine Cys-33 enhances the stability of the native conformation of TTR, avoiding misassembly of the protein leading to amyloid formation. As to expression, detected in serum (at protein level). Detected in liver and choroid plexus.

The protein resides in the secreted. In terms of biological role, thyroid hormone-binding protein. Probably transports thyroxine from the bloodstream to the brain. The sequence is that of Transthyretin (TTR) from Gallus gallus (Chicken).